A 940-amino-acid chain; its full sequence is Valine--tRNA ligase (940 aa).

Positions 47–57 (PNVTGILHMGH) match the 'HIGH' region motif. Residues 564-568 (KLSKS) carry the 'KMSKS' region motif. Lys567 is a binding site for ATP. Residues 872 to 938 (PIEQITKEKN…LQSILDKLAS (67 aa)) are a coiled coil.

This sequence belongs to the class-I aminoacyl-tRNA synthetase family. ValS type 1 subfamily. In terms of assembly, monomer.

The protein resides in the cytoplasm. The enzyme catalyses tRNA(Val) + L-valine + ATP = L-valyl-tRNA(Val) + AMP + diphosphate. Functionally, catalyzes the attachment of valine to tRNA(Val). As ValRS can inadvertently accommodate and process structurally similar amino acids such as threonine, to avoid such errors, it has a 'posttransfer' editing activity that hydrolyzes mischarged Thr-tRNA(Val) in a tRNA-dependent manner. This chain is Valine--tRNA ligase, found in Chlamydia felis (strain Fe/C-56) (Chlamydophila felis).